A 788-amino-acid polypeptide reads, in one-letter code: Integrin beta-6 (788 aa).

The signal sequence occupies residues 1 to 21 (MGIELLCFFFLFLGRDDHVRG). In terms of domain architecture, PSI spans 22 to 71 (GCAMEGAETCGDCLLIGPQCAWCSQENFTHPSGVSERCDTPANLLAKGCQ). Residues 22-709 (GCAMEGAETC…KDCPKPPNIP (688 aa)) lie on the Extracellular side of the membrane. Disulfide bonds link Cys-23–Cys-41, Cys-31–Cys-454, Cys-34–Cys-59, Cys-44–Cys-70, Cys-197–Cys-204, Cys-252–Cys-293, Cys-394–Cys-406, Cys-426–Cys-452, Cys-456–Cys-476, Cys-467–Cys-479, Cys-481–Cys-490, Cys-492–Cys-519, Cys-502–Cys-517, Cys-511–Cys-522, Cys-524–Cys-537, Cys-539–Cys-560, Cys-544–Cys-558, Cys-552–Cys-563, and Cys-565–Cys-574. N-linked (GlcNAc...) asparagine glycans are attached at residues Asn-48 and Asn-97. The VWFA domain occupies 131–371 (YPVDLYYLMD…QLIISAYEEL (241 aa)). Positions 140, 142, and 144 each coordinate Mg(2+). Ca(2+) is bound by residues Ser-144, Asp-147, Asp-148, and Glu-179. 4 residues coordinate Ca(2+): Asn-235, Asp-237, Pro-239, and Glu-240. Position 240 (Glu-240) interacts with Mg(2+). N-linked (GlcNAc...) asparagine glycosylation occurs at Asn-260. Residues Asp-271 and Lys-355 each coordinate Ca(2+). N-linked (GlcNAc...) asparagine glycans are attached at residues Asn-387, Asn-396, and Asn-418. 4 consecutive I-EGF domains span residues 456-491 (CQKE…PHCE), 492-538 (CGED…PYCQ), 539-575 (CDNF…EYCN), and 576-615 (CTTS…PTCE). N-linked (GlcNAc...) asparagine glycans are attached at residues Asn-463 and Asn-471. N-linked (GlcNAc...) asparagine glycosylation is present at Asn-541. A glycan (N-linked (GlcNAc...) asparagine) is linked at Asn-575. 9 disulfides stabilise this stretch: Cys-576–Cys-599, Cys-583–Cys-597, Cys-591–Cys-602, Cys-604–Cys-614, Cys-617–Cys-620, Cys-624–Cys-670, Cys-630–Cys-649, Cys-633–Cys-645, and Cys-678–Cys-702. Asn-696 carries an N-linked (GlcNAc...) asparagine glycan. A helical membrane pass occupies residues 710 to 730 (MIMLGVSLAILLIGVVLLCIW). Positions 731 to 758 (KLLVSFHDRKEVAKFEAERSKAKWQTGT) are interaction with HAX1. Residues 731-788 (KLLVSFHDRKEVAKFEAERSKAKWQTGTNPLYRGSTSTFKNVTYKHRDKLKTDLSTDG) are Cytoplasmic-facing.

It belongs to the integrin beta chain family. In terms of assembly, heterodimer of an alpha and a beta subunit. Interacts with FLNB. Interacts with HAX1. ITGAV:ITGB6 interacts with FBN1. ITGAV:ITGB6 interacts with TGFB1.

The protein localises to the cell membrane. It localises to the cell junction. It is found in the focal adhesion. Integrin alpha-V:beta-6 (ITGAV:ITGB6) is a receptor for fibronectin and cytotactin. It recognizes the sequence R-G-D in its ligands. ITGAV:ITGB6 acts as a receptor for fibrillin-1 (FBN1) and mediates R-G-D-dependent cell adhesion to FBN1. Integrin alpha-V:beta-6 (ITGAV:ITGB6) mediates R-G-D-dependent release of transforming growth factor beta-1 (TGF-beta-1) from regulatory Latency-associated peptide (LAP), thereby playing a key role in TGF-beta-1 activation. In Cavia porcellus (Guinea pig), this protein is Integrin beta-6 (ITGB6).